We begin with the raw amino-acid sequence, 380 residues long: Queuine tRNA-ribosyltransferase (380 aa).

Asp-96 serves as the catalytic Proton acceptor. Substrate is bound by residues 96 to 100, Asp-150, Gln-193, and Gly-220; that span reads DSGGF. An RNA binding region spans residues 251–257; that stretch reads GVGAPDS. The Nucleophile role is filled by Asp-270. The tract at residues 275 to 279 is RNA binding; important for wobble base 34 recognition; sequence TRIAR. Zn(2+) is bound by residues Cys-308, Cys-310, Cys-313, and His-339.

This sequence belongs to the queuine tRNA-ribosyltransferase family. As to quaternary structure, homodimer. Within each dimer, one monomer is responsible for RNA recognition and catalysis, while the other monomer binds to the replacement base PreQ1. Zn(2+) is required as a cofactor.

The catalysed reaction is 7-aminomethyl-7-carbaguanine + guanosine(34) in tRNA = 7-aminomethyl-7-carbaguanosine(34) in tRNA + guanine. It functions in the pathway tRNA modification; tRNA-queuosine biosynthesis. Functionally, catalyzes the base-exchange of a guanine (G) residue with the queuine precursor 7-aminomethyl-7-deazaguanine (PreQ1) at position 34 (anticodon wobble position) in tRNAs with GU(N) anticodons (tRNA-Asp, -Asn, -His and -Tyr). Catalysis occurs through a double-displacement mechanism. The nucleophile active site attacks the C1' of nucleotide 34 to detach the guanine base from the RNA, forming a covalent enzyme-RNA intermediate. The proton acceptor active site deprotonates the incoming PreQ1, allowing a nucleophilic attack on the C1' of the ribose to form the product. After dissociation, two additional enzymatic reactions on the tRNA convert PreQ1 to queuine (Q), resulting in the hypermodified nucleoside queuosine (7-(((4,5-cis-dihydroxy-2-cyclopenten-1-yl)amino)methyl)-7-deazaguanosine). The protein is Queuine tRNA-ribosyltransferase of Streptococcus agalactiae serotype Ia (strain ATCC 27591 / A909 / CDC SS700).